Consider the following 218-residue polypeptide: Pyridoxine/pyridoxamine 5'-phosphate oxidase (218 aa).

Substrate-binding positions include Arg-14–Tyr-17 and Lys-72. FMN contacts are provided by residues Arg-67 to Lys-72, Tyr-82 to Thr-83, Arg-88, Lys-89, and Gln-111. Substrate contacts are provided by Tyr-129, Arg-133, and Ser-137. FMN is bound by residues Gln-146–Ser-147 and Trp-191. Arg-197–His-199 serves as a coordination point for substrate. Arg-201 serves as a coordination point for FMN.

The protein belongs to the pyridoxamine 5'-phosphate oxidase family. As to quaternary structure, homodimer. Requires FMN as cofactor.

It catalyses the reaction pyridoxamine 5'-phosphate + O2 + H2O = pyridoxal 5'-phosphate + H2O2 + NH4(+). It carries out the reaction pyridoxine 5'-phosphate + O2 = pyridoxal 5'-phosphate + H2O2. It participates in cofactor metabolism; pyridoxal 5'-phosphate salvage; pyridoxal 5'-phosphate from pyridoxamine 5'-phosphate: step 1/1. Its pathway is cofactor metabolism; pyridoxal 5'-phosphate salvage; pyridoxal 5'-phosphate from pyridoxine 5'-phosphate: step 1/1. Functionally, catalyzes the oxidation of either pyridoxine 5'-phosphate (PNP) or pyridoxamine 5'-phosphate (PMP) into pyridoxal 5'-phosphate (PLP). The chain is Pyridoxine/pyridoxamine 5'-phosphate oxidase from Klebsiella pneumoniae subsp. pneumoniae (strain ATCC 700721 / MGH 78578).